The chain runs to 3674 residues: Spectrin beta chain, non-erythrocytic 5 (3674 aa).

The interval 1-37 (MAGQPHSPRELLGAAGHRSRRPSTELRVPPSPSLTMD) is disordered. The actin-binding stretch occupies residues 1 to 279 (MAGQPHSPRE…IMTYVSLYYH (279 aa)). 2 consecutive Calponin-homology (CH) domains span residues 54-159 (QMQE…LRFQ) and 177-282 (LSTK…HYCS). 8 Spectrin repeats span residues 307–416 (LQTQ…ALQQ), 428–529 (ARRF…RKQV), 642–742 (AEFL…ARLQ), 747–810 (VLQY…QGRA), 900–996 (GFCS…AVQL), 1103–1206 (ARQS…WLQE), 1209–1311 (ELQK…RQLL), and 1315–1417 (QLQE…ELQQ). Residues 1441–1469 (ALQSSETGQDLRSSQRLQKRHQQLESESR) form a disordered region. The span at 1442–1456 (LQSSETGQDLRSSQR) shows a compositional bias: polar residues. Spectrin repeat units lie at residues 1521-1624 (ELHQ…CLQQ), 1628-1727 (FQQY…RELE), 1731-1835 (RLHE…ALRD), 1842-1940 (VHRD…AQLE), 1944-2046 (LLAR…ERLQ), 2052-2146 (QLFL…HALH), 2150-2253 (LMAS…ELED), 2256-2361 (NFLE…QQLE), 2366-2467 (IHVL…EALD), 2471-2574 (QAQK…QLQQ), 2577-2680 (ELQL…RLEE), 2683-2784 (QLQA…AKLQ), 2791-2890 (RLRR…TALE), 2894-2997 (LLLK…LLQQ), 3000-3103 (EAQQ…GLQE), 3106-3209 (QLHQ…ENLA), 3213-3311 (EVHS…QWLA), 3318-3415 (AFLG…RWQR), and 3422-3488 (LQKL…EQEL). The 109-residue stretch at 3533–3641 (TPTMEGSLEF…WWRALGSTAA (109 aa)) folds into the PH domain.

It belongs to the spectrin family. As to quaternary structure, probably associates with an alpha chain. Interacts (via C-terminus) with TRPC4. As to expression, expressed at very low levels in many tissues, with strongest expression in cerebellum, spinal cord, stomach, pituitary gland, liver, pancreas, salivary gland, kidney, bladder, and heart.

The protein localises to the cytoplasm. It localises to the cytoskeleton. This chain is Spectrin beta chain, non-erythrocytic 5 (SPTBN5), found in Homo sapiens (Human).